A 421-amino-acid polypeptide reads, in one-letter code: C2H2 type master regulator of conidiophore development brlA (421 aa).

C2H2-type zinc fingers lie at residues 309 to 333 (FKCK…MKSH) and 339 to 364 (HVCW…TKTH). The disordered stretch occupies residues 379–421 (ESSPDYDPDFRGQLTPDGLPIRGSTLDDPMPNSREYSVDGLDD).

The protein localises to the nucleus. Its function is as follows. BrlA, abaA and wetA are pivotal regulators of conidiophore development and conidium maturation. They act individually and together to regulate their own expression and that of numerous other sporulation-specific genes. Binds promoters of target genes at brlA response elements (BREs) containing the conserved sequence 5'-(C/A)(A/G)AGGG(G/A)-3'. Required for conidiophores formation. Controls expression of abaA. In Aspergillus oryzae (strain ATCC 42149 / RIB 40) (Yellow koji mold), this protein is C2H2 type master regulator of conidiophore development brlA.